We begin with the raw amino-acid sequence, 142 residues long: General odorant-binding protein 99a (142 aa).

A signal peptide spans 1 to 16 (MKVFVAICVLIGLASA). 3 disulfides stabilise this stretch: Cys33/Cys64, Cys60/Cys116, and Cys105/Cys125.

The protein belongs to the PBP/GOBP family. In terms of tissue distribution, expressed in larval chemosensory organ. Specifically expressed exclusively in a subset of chemosensory sensilla on the third antennal segment.

Its subcellular location is the secreted. Functionally, present in the aqueous fluid surrounding olfactory sensory dendrites and are thought to aid in the capture and transport of hydrophobic odorants into and through this fluid. The sequence is that of General odorant-binding protein 99a (Obp99a) from Drosophila melanogaster (Fruit fly).